A 953-amino-acid chain; its full sequence is Mannosylglycoprotein endo-beta-mannosidase (953 aa).

Catalysis depends on E461, which acts as the Proton donor. The Nucleophile role is filled by E553.

Belongs to the glycosyl hydrolase 2 family. As to quaternary structure, heterotrimer of 31 kDa, 28 kDa and 42 kDa subunits. In terms of processing, the mature enzyme is proteotically cleaved into 3 subunits of 31 kDa, 28 kDa and 42 kDa. As to expression, ubiquitously expressed.

It catalyses the reaction Hydrolysis of the alpha-D-mannosyl-(1-&gt;6)-beta-D-mannosyl-(1-&gt;4)-N-acetyl-beta-D-glucosaminyl-(1-&gt;4)-N-acetyl-beta-D-glucosaminyl sequence of glycoprotein to alpha-D-mannosyl-(1-&gt;6)-D-mannose and N-acetyl-beta-D-glucosaminyl-(1-&gt;4)-N-acetyl-beta-D-glucosaminyl sequences.. In terms of biological role, glycosidase that specifically hydrolyzes the Man-beta-1,4-GlcNAc linkage in the trimannosyl core structure of N-glycans. Does not hydrolyzes pyridylamino derivatives sugar chains containing Man-alpha-1,3-Man-beta or Xylose-beta-1,2-Man-beta. The sequence is that of Mannosylglycoprotein endo-beta-mannosidase (EBM) from Lilium longiflorum (Trumpet lily).